The sequence spans 255 residues: MVDPVAALCNYNVLEVIFSYLELEDLNHCSQVCKSWYHFLNDENSDVWRWHCLNKLPKEALKSDLLASVSTYKTKLRAYFHAWSPNDCSRNVYIKPNGFTLHRNPVAQSTDAARSKIGFRHGRHTWEVIWEGPLGTVAVIGISTKEAALQCHGYVALLGSDDQSWGWNLVENHLLHNGDMQGSYPLLNNAPKYQVGERIRVILDCEDNTLSFEKNYEFLGVAFRGLPDKKLYPTVSAVYGNTEVSMVYLGTPLDG.

One can recognise an F-box domain in the interval Asp-3–His-51. In terms of domain architecture, B30.2/SPRY spans Leu-61–Leu-253.

Belongs to the FBXO45/Fsn family. In terms of assembly, component of an E3 ubiquitin ligase complex composed of hiw and Fsn.

Its subcellular location is the synapse. It functions in the pathway protein modification; protein ubiquitination. Functionally, required in the presynaptic motoneuron to down-regulate the levels of wnd and restrain synaptic terminal growth at the neuromuscular junction (NMJ). This chain is F-box/SPRY domain-containing protein 1, found in Drosophila yakuba (Fruit fly).